A 254-amino-acid chain; its full sequence is Thiazole synthase (254 aa).

Catalysis depends on Lys-96, which acts as the Schiff-base intermediate with DXP. 1-deoxy-D-xylulose 5-phosphate is bound by residues Gly-157, Ala-183 to Gly-184, and Asn-205 to Thr-206.

This sequence belongs to the ThiG family. As to quaternary structure, homotetramer. Forms heterodimers with either ThiH or ThiS.

The protein resides in the cytoplasm. The enzyme catalyses [ThiS sulfur-carrier protein]-C-terminal-Gly-aminoethanethioate + 2-iminoacetate + 1-deoxy-D-xylulose 5-phosphate = [ThiS sulfur-carrier protein]-C-terminal Gly-Gly + 2-[(2R,5Z)-2-carboxy-4-methylthiazol-5(2H)-ylidene]ethyl phosphate + 2 H2O + H(+). Its pathway is cofactor biosynthesis; thiamine diphosphate biosynthesis. Catalyzes the rearrangement of 1-deoxy-D-xylulose 5-phosphate (DXP) to produce the thiazole phosphate moiety of thiamine. Sulfur is provided by the thiocarboxylate moiety of the carrier protein ThiS. In vitro, sulfur can be provided by H(2)S. This is Thiazole synthase from Clostridium perfringens (strain SM101 / Type A).